The primary structure comprises 75 residues: RNA-binding protein KhpA (75 aa).

Residues 29–75 (KVVYHLTVHPDDVGKVIGKNGRIAKAIRTVVYASKTDGNKRIYLDIM) form the KH domain.

The protein belongs to the KhpA RNA-binding protein family. In terms of assembly, forms a complex with KhpB.

It localises to the cytoplasm. In terms of biological role, a probable RNA chaperone. Forms a complex with KhpB which binds to cellular RNA and controls its expression. Plays a role in peptidoglycan (PG) homeostasis and cell length regulation. The protein is RNA-binding protein KhpA of Oceanobacillus iheyensis (strain DSM 14371 / CIP 107618 / JCM 11309 / KCTC 3954 / HTE831).